The sequence spans 465 residues: Ribulose bisphosphate carboxylase large chain (465 aa).

The residue at position 4 (K4) is an N6,N6,N6-trimethyllysine. Positions 113 and 163 each coordinate substrate. The active-site Proton acceptor is the K165. K167 lines the substrate pocket. Positions 191, 193, and 194 each coordinate Mg(2+). Position 191 is an N6-carboxylysine (K191). H284 (proton acceptor) is an active-site residue. Substrate-binding residues include R285, H317, and S369.

It belongs to the RuBisCO large chain family. Type I subfamily. In terms of assembly, heterohexadecamer of 8 large chains and 8 small chains; disulfide-linked. The disulfide link is formed within the large subunit homodimers. Mg(2+) serves as cofactor. The disulfide bond which can form in the large chain dimeric partners within the hexadecamer appears to be associated with oxidative stress and protein turnover.

The protein localises to the plastid. The protein resides in the chloroplast. The catalysed reaction is 2 (2R)-3-phosphoglycerate + 2 H(+) = D-ribulose 1,5-bisphosphate + CO2 + H2O. It catalyses the reaction D-ribulose 1,5-bisphosphate + O2 = 2-phosphoglycolate + (2R)-3-phosphoglycerate + 2 H(+). Functionally, ruBisCO catalyzes two reactions: the carboxylation of D-ribulose 1,5-bisphosphate, the primary event in carbon dioxide fixation, as well as the oxidative fragmentation of the pentose substrate in the photorespiration process. Both reactions occur simultaneously and in competition at the same active site. This chain is Ribulose bisphosphate carboxylase large chain, found in Humiria balsamifera (Tauroniro).